Consider the following 275-residue polypeptide: Autophagy protein 5 (275 aa).

Residue Met1 is modified to N-acetylmethionine. A Glycyl lysine isopeptide (Lys-Gly) (interchain with G-Cter in ATG12) cross-link involves residue Lys130.

The protein belongs to the ATG5 family. As to quaternary structure, forms a conjugate with ATG12. Part of the minor complex composed of 4 sets of ATG12-ATG5 and ATG16L1 (400 kDa); this complex interacts with ATG3 leading to disruption of ATG7 interaction and promotion of ATG8-like proteins lipidation. Forms an 800-kDa complex composed of ATG12-ATG5 and ATG16L2. The ATG12-ATG5 conjugate interacts with RAB33A; this interaction is bridged by ATG16L1 and promotes ATG12-ATG5-ATG16L1 complex recruitment to phagophores. Interacts with TECPR1; the interaction is direct and does not take place when ATG16L1 is associated with the ATG5-ATG12 conjugate. Interacts with DHX58/RIG-1, IFIH1/MDA5 and MAVS/IPS-1 in monomeric form as well as in ATG12-ATG5 conjugate form. The interaction with MAVS is further enhanced upon vesicular stomatitis virus (VSV) infection. Interacts with ATG3. Interacts with ATG7 and ATG10. Interacts with FADD. Interacts with Bassoon/BSN; this interaction is important for the regulation of presynaptic autophagy. Interacts with ATG16L2. Post-translationally, conjugated to ATG12; which is essential for autophagy, but is not required for association with isolation membrane. In terms of processing, acetylated by EP300. Ubiquitous.

It localises to the cytoplasm. Its subcellular location is the preautophagosomal structure membrane. Functionally, involved in autophagic vesicle formation. Conjugation with ATG12, through a ubiquitin-like conjugating system involving ATG7 as an E1-like activating enzyme and ATG10 as an E2-like conjugating enzyme, is essential for its function. The ATG12-ATG5 conjugate acts as an E3-like enzyme which is required for lipidation of ATG8 family proteins and their association to the vesicle membranes. Involved in mitochondrial quality control after oxidative damage, and in subsequent cellular longevity. Plays a critical role in multiple aspects of lymphocyte development and is essential for both B and T lymphocyte survival and proliferation. Required for optimal processing and presentation of antigens for MHC II. Involved in the maintenance of axon morphology and membrane structures, as well as in normal adipocyte differentiation. Promotes primary ciliogenesis through removal of OFD1 from centriolar satellites and degradation of IFT20 via the autophagic pathway. As part of the ATG8 conjugation system with ATG12 and ATG16L1, required for recruitment of LRRK2 to stressed lysosomes and induction of LRRK2 kinase activity in response to lysosomal stress. Its function is as follows. May play an important role in the apoptotic process, possibly within the modified cytoskeleton. Its expression is a relatively late event in the apoptotic process, occurring downstream of caspase activity. Plays a crucial role in IFN-gamma-induced autophagic cell death by interacting with FADD. In terms of biological role, (Microbial infection) May act as a proviral factor. In association with ATG12, negatively regulates the innate antiviral immune response by impairing the type I IFN production pathway upon vesicular stomatitis virus (VSV) infection. This chain is Autophagy protein 5, found in Mus musculus (Mouse).